Here is a 628-residue protein sequence, read N- to C-terminus: Propionate--CoA ligase (628 aa).

The protein belongs to the ATP-dependent AMP-binding enzyme family.

It carries out the reaction propanoate + ATP + CoA = propanoyl-CoA + AMP + diphosphate. It functions in the pathway organic acid metabolism; propanoate degradation. In terms of biological role, catalyzes the synthesis of propionyl-CoA from propionate and CoA. Also converts acetate to acetyl-CoA but with a lower specific activity. The chain is Propionate--CoA ligase (prpE) from Escherichia coli (strain K12).